A 310-amino-acid chain; its full sequence is RNA exonuclease 4 (310 aa).

The span at 1–11 shows a compositional bias: polar residues; the sequence is MDVNNLSSNWK. The segment at 1-107 is disordered; the sequence is MDVNNLSSNW…SKPTKVNEGR (107 aa). Composition is skewed to basic and acidic residues over residues 44 to 53 and 61 to 70; these read QKIETIERKK and MSEGQEHGGD. The segment covering 83 to 93 has biased composition (polar residues); that stretch reads HKSSTATISEQ. The span at 94–105 shows a compositional bias: basic and acidic residues; that stretch reads SRTESKPTKVNE. Positions 115-277 constitute an Exonuclease domain; sequence KYVAMDCEMV…YRRDKEAFER (163 aa). Positions 287 to 310 are disordered; that stretch reads VVVDKKENGEDQKKKKKKKKPRKR. Residues 288–299 are compositionally biased toward basic and acidic residues; sequence VVDKKENGEDQK. Residues 300-310 are compositionally biased toward basic residues; it reads KKKKKKKPRKR.

The protein belongs to the REXO4 family.

The protein localises to the nucleus. Its function is as follows. Exoribonuclease involved in ribosome biosynthesis. Involved in the processing of ITS1, the internal transcribed spacer localized between the 18S and 5.8S rRNAs. The protein is RNA exonuclease 4 (rex4) of Aspergillus fumigatus (strain ATCC MYA-4609 / CBS 101355 / FGSC A1100 / Af293) (Neosartorya fumigata).